We begin with the raw amino-acid sequence, 84 residues long: Translational regulator CsrA (84 aa).

This sequence belongs to the CsrA/RsmA family. Homodimer; the beta-strands of each monomer intercalate to form a hydrophobic core, while the alpha-helices form wings that extend away from the core.

The protein localises to the cytoplasm. In terms of biological role, a translational regulator that binds mRNA to regulate translation initiation and/or mRNA stability. Usually binds in the 5'-UTR at or near the Shine-Dalgarno sequence preventing ribosome-binding, thus repressing translation. Its main target seems to be the major flagellin gene, while its function is anatagonized by FliW. This Leptospira interrogans serogroup Icterohaemorrhagiae serovar Lai (strain 56601) protein is Translational regulator CsrA.